A 210-amino-acid polypeptide reads, in one-letter code: Small ribosomal subunit protein uS4 (210 aa).

The S4 RNA-binding domain maps to 100 to 160 (GRLDNVVYRM…EKSKNQLRVK (61 aa)).

This sequence belongs to the universal ribosomal protein uS4 family. In terms of assembly, part of the 30S ribosomal subunit. Contacts protein S5. The interaction surface between S4 and S5 is involved in control of translational fidelity.

Functionally, one of the primary rRNA binding proteins, it binds directly to 16S rRNA where it nucleates assembly of the body of the 30S subunit. With S5 and S12 plays an important role in translational accuracy. This is Small ribosomal subunit protein uS4 from Alcanivorax borkumensis (strain ATCC 700651 / DSM 11573 / NCIMB 13689 / SK2).